The chain runs to 278 residues: MDMAADIASDHFISRRVDIGRITLNVREKGSGPLMLFFHGITSNSAVFEPLMIRLSDRFTTIAVDQRGHGLSDKPETGYEANDYADDIAGLIRTLARGHAILVGHSLGARNSVTAAAKYPDLVRSVVAIDFTPYIETEALDALEARVNAGSQLFEDIKAVEAYLAGRYPNIPADAIRIRAESGYQPVDGGLRPLASSAAMAQTARGLRSDLVPAYRDVTKPVLIVRGESSKLVSAAALAKTSRLRPDLPVVVVPGADHYVNEVSPEITLKAITNFIDA.

Residues Ile41 and Ser106–Leu107 each bind chloride. The active-site Nucleophile is Ser106. Residues Asp130 and His258 contribute to the active site.

This sequence belongs to the AB hydrolase superfamily. As to quaternary structure, homodimer.

The catalysed reaction is 2-(acetamidomethylene)succinate + 2 H2O + H(+) = succinate semialdehyde + acetate + NH4(+) + CO2. It participates in cofactor degradation; B6 vitamer degradation. Functionally, catalyzes the final reaction in the degradation of vitamin B6 from (E)-2-(acetamidomethylene)succinate (E-2AMS) to produce succinic semialdehyde, acetate, ammonia and carbon dioxide. This is 2-(acetamidomethylene)succinate hydrolase from Mesorhizobium japonicum (strain LMG 29417 / CECT 9101 / MAFF 303099) (Mesorhizobium loti (strain MAFF 303099)).